The following is a 449-amino-acid chain: Glycerol-3-phosphate acyltransferase 3 (449 aa).

The next 3 membrane-spanning stretches (helical) occupy residues 9-29 (FVLLHVWMSIVAGLIVLPAMF), 146-166 (ISVRLTIIWGLGVFVRYCVLL), and 170-190 (ITLAVIGLSWLVIGTTLVGFL). The HXXXXD motif motif lies at 238 to 243 (HTSPID). The helical transmembrane segment at 358 to 378 (MVSYILRMMTSWAIVCNVWYL) threads the bilayer.

It belongs to the 1-acyl-sn-glycerol-3-phosphate acyltransferase family.

The protein localises to the endoplasmic reticulum membrane. The catalysed reaction is sn-glycerol 3-phosphate + an acyl-CoA = a 1-acyl-sn-glycero-3-phosphate + CoA. It catalyses the reaction a 1-acyl-sn-glycero-3-phosphate + an acyl-CoA = a 1,2-diacyl-sn-glycero-3-phosphate + CoA. It carries out the reaction dodecanoyl-CoA + sn-glycerol 3-phosphate = 1-dodecanoyl-sn-glycerol 3-phosphate + CoA. The enzyme catalyses sn-glycerol 3-phosphate + hexadecanoyl-CoA = 1-hexadecanoyl-sn-glycero-3-phosphate + CoA. The catalysed reaction is sn-glycerol 3-phosphate + (9Z)-octadecenoyl-CoA = 1-(9Z-octadecenoyl)-sn-glycero-3-phosphate + CoA. It catalyses the reaction (9Z,12Z)-octadecadienoyl-CoA + sn-glycerol 3-phosphate = 1-(9Z,12Z)-octadecadienoyl-sn-glycero-3-phosphate + CoA. It carries out the reaction 1-tetradecanoyl-sn-glycerol 3-phosphate + (9Z)-octadecenoyl-CoA = 1-tetradecanoyl-2-(9Z)-octadecenoyl-sn-glycero-3-phosphate + CoA. The enzyme catalyses 1-hexadecanoyl-sn-glycero-3-phosphate + (9Z)-octadecenoyl-CoA = 1-hexadecanoyl-2-(9Z-octadecenoyl)-sn-glycero-3-phosphate + CoA. The catalysed reaction is 1-(9Z-octadecenoyl)-sn-glycero-3-phosphate + (9Z)-octadecenoyl-CoA = 1,2-di-(9Z-octadecenoyl)-sn-glycero-3-phosphate + CoA. It catalyses the reaction 1-(6Z,9Z,12Z-octadecatrienoyl)-sn-glycero-3-phosphate + (9Z)-octadecenoyl-CoA = (6Z,9Z,12Z)-octadecatrienoyl-2-(9Z)-octadecenoyl-sn-glycero-3-phosphate + CoA. It carries out the reaction 1-(9Z,12Z,15Z)-octadecatrienoyl-sn-glycero-3-phosphate + (9Z)-octadecenoyl-CoA = 1-(9Z,12Z,15Z)-octadecatrienoyl-2-(9Z)-octadecenoyl-sn-glycero-3-phosphate + CoA. The enzyme catalyses 1-(9Z-octadecenoyl)-sn-glycero-3-phosphate + tetradecanoyl-CoA = 1-(9Z)-octadecenoyl-2-tetradecanoyl-sn-glycero-3-phosphate + CoA. The catalysed reaction is 1-(9Z-octadecenoyl)-sn-glycero-3-phosphate + hexadecanoyl-CoA = 1-(9Z)-octadecenoyl-2-hexadecanoyl-sn-glycero-3-phosphate + CoA. It catalyses the reaction 1-(9Z-octadecenoyl)-sn-glycero-3-phosphate + octadecanoyl-CoA = 1-(9Z-octadecenoyl)-2-octadecanoyl-sn-glycero-3-phosphate + CoA. It carries out the reaction 1-(9Z-octadecenoyl)-sn-glycero-3-phosphate + (9Z,12Z)-octadecadienoyl-CoA = 1-(9Z)-octadecenoyl-2-(9Z,12Z)-octadecadienoyl-sn-glycero-3-phosphate + CoA. The enzyme catalyses 1-(5Z,8Z,11Z,14Z-eicosatetraenoyl)-sn-glycero-3-phosphate + (9Z)-octadecenoyl-CoA = 1-(5Z,8Z,11Z,14Z)-eicosatetraenoyl-2-(9Z)-octadecenoyl-sn-glycero-3-phosphate + CoA. It functions in the pathway glycerolipid metabolism; triacylglycerol biosynthesis. The protein operates within phospholipid metabolism; CDP-diacylglycerol biosynthesis; CDP-diacylglycerol from sn-glycerol 3-phosphate: step 1/3. Its function is as follows. Converts glycerol-3-phosphate to 1-acyl-sn-glycerol-3-phosphate (lysophosphatidic acid or LPA) by incorporating an acyl moiety at the sn-1 position of the glycerol backbone. Also converts LPA into 1,2-diacyl-sn-glycerol-3-phosphate (phosphatidic acid or PA) by incorporating an acyl moiety at the sn-2 position of the glycerol backbone. Protects cells against lipotoxicity. This chain is Glycerol-3-phosphate acyltransferase 3, found in Danio rerio (Zebrafish).